Consider the following 481-residue polypeptide: Phosphatidylinositol 4-kinase type 2-beta (481 aa).

A compositionally biased stretch (basic and acidic residues) spans 1–11 (MEDPSEPDRLA). The tract at residues 1 to 82 (MEDPSEPDRL…VSRSSSAELD (82 aa)) is disordered. Phosphoserine occurs at positions 12, 17, and 45. Acidic residues predominate over residues 53–64 (AGEEGEAGDEEL). The PI3K/PI4K catalytic domain maps to 120-451 (GIFPERISQG…VQIPCVIVER (332 aa)). The segment at 126 to 132 (ISQGSSG) is G-loop. Residues serine 133 and lysine 148 each coordinate ATP. The important for substrate binding stretch occupies residues 153–155 (EPY). The important for interaction with membranes stretch occupies residues 161–174 (KWTKYVHKVCCPCC). Residues 257–260 (QLFV) and 271–272 (RK) each bind ATP. Positions 264-272 (KEAEYWLRK) are important for interaction with membranes. The segment at 301-309 (RNTDRGNDN) is catalytic loop. Residues 342-362 (AIDNGLAFPFKHPDEWRAYPF) are activation loop. Aspartate 344 contacts ATP. The tract at residues 357–366 (WRAYPFHWAW) is important for interaction with membranes.

Belongs to the PI3/PI4-kinase family. Type II PI4K subfamily. Widely expressed.

Its subcellular location is the cytoplasm. It is found in the cytosol. The protein localises to the golgi apparatus membrane. It localises to the endoplasmic reticulum membrane. The protein resides in the cell membrane. Its subcellular location is the early endosome membrane. It catalyses the reaction a 1,2-diacyl-sn-glycero-3-phospho-(1D-myo-inositol) + ATP = a 1,2-diacyl-sn-glycero-3-phospho-(1D-myo-inositol 4-phosphate) + ADP + H(+). Its activity is regulated as follows. Inhibited by phenylarsine oxide and adenosine. Activation through membrane association is stimulated by active RAC1. In terms of biological role, together with PI4K2A and the type III PI4Ks (PIK4CA and PIK4CB) it contributes to the overall PI4-kinase activity of the cell. This contribution may be especially significant in plasma membrane, endosomal and Golgi compartments. The phosphorylation of phosphatidylinositol (PI) to PI4P is the first committed step in the generation of phosphatidylinositol 4,5-bisphosphate (PIP2), a precursor of the second messenger inositol 1,4,5-trisphosphate (InsP3). Contributes to the production of InsP3 in stimulated cells and is likely to be involved in the regulation of vesicular trafficking. This chain is Phosphatidylinositol 4-kinase type 2-beta (PI4K2B), found in Homo sapiens (Human).